We begin with the raw amino-acid sequence, 503 residues long: Rhomboid-type serine protease 2 (503 aa).

The segment covering 1–11 (MAAQSYYNGAY) has biased composition (polar residues). The interval 1–66 (MAAQSYYNGA…SLRYSQQSIG (66 aa)) is disordered. At 1 to 136 (MAAQSYYNGA…QKKKGFFQKK (136 aa)) the chain is on the cytoplasmic side. Residues 137–157 (IAYVTYILTIAQIIVFIVELV) form a helical membrane-spanning segment. Topologically, residues 158–253 (KMGQLTGSPI…DKPAPDQWFR (96 aa)) are extracellular. A helical membrane pass occupies residues 254–274 (FIIPMFLHSGFVHIGFNLLVQ). Over 275–283 (MTMGADMER) the chain is Cytoplasmic. A helical membrane pass occupies residues 284–304 (MIGWWRYGLVYLSSGIWGFVL). Topologically, residues 305–316 (GGNYAGQGEASC) are extracellular. A helical membrane pass occupies residues 317-337 (GCSGALFGILALFVLDLLYGW). Residue Ser319 is the Nucleophile of the active site. At 338 to 342 (NDRQN) the chain is on the cytoplasmic side. Residues 343-363 (PWVELIIMVLGIAVSFVLGLL) form a helical membrane-spanning segment. The Extracellular segment spans residues 364-365 (PG). The chain crosses the membrane as a helical span at residues 366–386 (LDNFSHLGGFTMGLALGLCVM). His371 is an active-site residue. At 387–449 (RSPNALRERI…FAGRKPLWWA (63 aa)) the chain is on the cytoplasmic side. Residues 450 to 470 (WWLVRLGALVAVLIGFILLIV) traverse the membrane as a helical segment. The Extracellular portion of the chain corresponds to 471–503 (NFYKYPSSNCSWCYRFSCLPVNGWCDQGNLFSR).

It belongs to the peptidase S54 family.

It localises to the membrane. The enzyme catalyses Cleaves type-1 transmembrane domains using a catalytic dyad composed of serine and histidine that are contributed by different transmembrane domains.. In terms of biological role, probable rhomboid-type serine protease that catalyzes intramembrane proteolysis. This Emericella nidulans (strain FGSC A4 / ATCC 38163 / CBS 112.46 / NRRL 194 / M139) (Aspergillus nidulans) protein is Rhomboid-type serine protease 2.